Here is a 283-residue protein sequence, read N- to C-terminus: MGKEADVEAGGVRDYEDPPPAPLVDIDELGRWSLYRAVIAEFVATLLFLYVTVATVIGYKHQTDASASGDDAACGGVGVLGIAWAFGGMIFILVYCTAGISGGHINPAVTFGLFLARKVSLVRAILYIVAQCLGAVCGVALVKGFQSSFYDRYGGGANELAAGYSKGTGLAAEIIGTFVLVYTVFSATDPKRNARDSHVPVLAPLPIGFAVFMVHLATIPVTGTGINPARSLGAAVVYNNSKAWSDQWIFWVGPFIGAAIAALYHQIVLRASARGYGSFRSNA.

The next 2 helical transmembrane spans lie at 37–57 and 74–94; these read AVIAEFVATLLFLYVTVATVI and CGGVGVLGIAWAFGGMIFILV. The short motif at 106-108 is the NPA 1 element; sequence NPA. 3 helical membrane-spanning segments follow: residues 125–145, 167–187, and 199–219; these read ILYIVAQCLGAVCGVALVKGF, GTGLAAEIIGTFVLVYTVFSA, and VPVLAPLPIGFAVFMVHLATI. The NPA 2 signature appears at 227-229; it reads NPA. Residues 249 to 269 traverse the membrane as a helical segment; that stretch reads IFWVGPFIGAAIAALYHQIVL.

Belongs to the MIP/aquaporin (TC 1.A.8) family. PIP (TC 1.A.8.11) subfamily. Expressed in roots.

Its subcellular location is the cell membrane. In terms of biological role, water channel required to facilitate the transport of water across cell membrane. May play a role in root water uptake. This chain is Aquaporin PIP2-5 (PIP2-5), found in Oryza sativa subsp. japonica (Rice).